The chain runs to 492 residues: Probable proline dehydrogenase, mitochondrial (492 aa).

This sequence belongs to the proline oxidase family. The cofactor is FAD.

The protein resides in the mitochondrion. It carries out the reaction L-proline + a quinone = (S)-1-pyrroline-5-carboxylate + a quinol + H(+). Its function is as follows. Converts proline to delta-1-pyrroline-5-carboxylate. The polypeptide is Probable proline dehydrogenase, mitochondrial (Schizosaccharomyces pombe (strain 972 / ATCC 24843) (Fission yeast)).